Consider the following 796-residue polypeptide: Probable phosphoketolase 2 (796 aa).

This sequence belongs to the XFP family. Thiamine diphosphate serves as cofactor.

This chain is Probable phosphoketolase 2, found in Lactiplantibacillus plantarum (strain ATCC BAA-793 / NCIMB 8826 / WCFS1) (Lactobacillus plantarum).